The following is a 147-amino-acid chain: Basic phospholipase A2 beta-bungarotoxin A2 chain (147 aa).

The N-terminal stretch at 1 to 19 (MYPAHLLVLSAVCVSLLGA) is a signal peptide. Residues 20–27 (ANIPPYPL) constitute a propeptide that is removed on maturation. 6 disulfide bridges follow: Cys-54–Cys-146, Cys-56–Cys-72, Cys-71–Cys-127, Cys-78–Cys-120, Cys-88–Cys-113, and Cys-106–Cys-118. 3 residues coordinate Ca(2+): Tyr-55, Gly-57, and Gly-59. Residue His-75 is part of the active site. Asp-76 is a Ca(2+) binding site. The active site involves Asp-121.

It belongs to the phospholipase A2 family. Group I subfamily. D49 sub-subfamily. Heterodimer; disulfide-linked. The A chains have phospholipase A2 activity and the B chains show homology with the basic protease inhibitors. It depends on Ca(2+) as a cofactor. In terms of tissue distribution, expressed by the venom gland.

It is found in the secreted. The catalysed reaction is a 1,2-diacyl-sn-glycero-3-phosphocholine + H2O = a 1-acyl-sn-glycero-3-phosphocholine + a fatty acid + H(+). Snake venom phospholipase A2 (PLA2) that inhibits neuromuscular transmission by blocking acetylcholine release from the nerve termini. PLA2 catalyzes the calcium-dependent hydrolysis of the 2-acyl groups in 3-sn-phosphoglycerides. In Bungarus caeruleus (Indian krait), this protein is Basic phospholipase A2 beta-bungarotoxin A2 chain.